A 326-amino-acid polypeptide reads, in one-letter code: tRNA U34 carboxymethyltransferase (326 aa).

Residues K95, W109, K114, G134, 184–185 (VE), Y204, and R319 each bind carboxy-S-adenosyl-L-methionine.

Belongs to the class I-like SAM-binding methyltransferase superfamily. CmoB family.

It carries out the reaction carboxy-S-adenosyl-L-methionine + 5-hydroxyuridine(34) in tRNA = 5-carboxymethoxyuridine(34) in tRNA + S-adenosyl-L-homocysteine + H(+). Catalyzes carboxymethyl transfer from carboxy-S-adenosyl-L-methionine (Cx-SAM) to 5-hydroxyuridine (ho5U) to form 5-carboxymethoxyuridine (cmo5U) at position 34 in tRNAs. This is tRNA U34 carboxymethyltransferase from Trichodesmium erythraeum (strain IMS101).